We begin with the raw amino-acid sequence, 322 residues long: 4-diphosphocytidyl-2-C-methyl-D-erythritol kinase (322 aa).

K25 is an active-site residue. An ATP-binding site is contributed by 110–120; it reads PVAGGMAGGSA. Residue D152 is part of the active site.

This sequence belongs to the GHMP kinase family. IspE subfamily.

It catalyses the reaction 4-CDP-2-C-methyl-D-erythritol + ATP = 4-CDP-2-C-methyl-D-erythritol 2-phosphate + ADP + H(+). Its pathway is isoprenoid biosynthesis; isopentenyl diphosphate biosynthesis via DXP pathway; isopentenyl diphosphate from 1-deoxy-D-xylulose 5-phosphate: step 3/6. Catalyzes the phosphorylation of the position 2 hydroxy group of 4-diphosphocytidyl-2C-methyl-D-erythritol. This is 4-diphosphocytidyl-2-C-methyl-D-erythritol kinase from Mycolicibacterium vanbaalenii (strain DSM 7251 / JCM 13017 / BCRC 16820 / KCTC 9966 / NRRL B-24157 / PYR-1) (Mycobacterium vanbaalenii).